Reading from the N-terminus, the 505-residue chain is Aspartyl/glutamyl-tRNA(Asn/Gln) amidotransferase subunit B (505 aa).

The interval 220-241 (NVSLRPRPAPGDPDAPFGTRSE) is disordered.

This sequence belongs to the GatB/GatE family. GatB subfamily. As to quaternary structure, heterotrimer of A, B and C subunits.

It carries out the reaction L-glutamyl-tRNA(Gln) + L-glutamine + ATP + H2O = L-glutaminyl-tRNA(Gln) + L-glutamate + ADP + phosphate + H(+). It catalyses the reaction L-aspartyl-tRNA(Asn) + L-glutamine + ATP + H2O = L-asparaginyl-tRNA(Asn) + L-glutamate + ADP + phosphate + 2 H(+). In terms of biological role, allows the formation of correctly charged Asn-tRNA(Asn) or Gln-tRNA(Gln) through the transamidation of misacylated Asp-tRNA(Asn) or Glu-tRNA(Gln) in organisms which lack either or both of asparaginyl-tRNA or glutaminyl-tRNA synthetases. The reaction takes place in the presence of glutamine and ATP through an activated phospho-Asp-tRNA(Asn) or phospho-Glu-tRNA(Gln). The chain is Aspartyl/glutamyl-tRNA(Asn/Gln) amidotransferase subunit B from Frankia casuarinae (strain DSM 45818 / CECT 9043 / HFP020203 / CcI3).